A 140-amino-acid polypeptide reads, in one-letter code: 3-hydroxyacyl-[acyl-carrier-protein] dehydratase FabZ (140 aa).

His48 is a catalytic residue.

Belongs to the thioester dehydratase family. FabZ subfamily.

It localises to the cytoplasm. It carries out the reaction a (3R)-hydroxyacyl-[ACP] = a (2E)-enoyl-[ACP] + H2O. Functionally, involved in unsaturated fatty acids biosynthesis. Catalyzes the dehydration of short chain beta-hydroxyacyl-ACPs and long chain saturated and unsaturated beta-hydroxyacyl-ACPs. The sequence is that of 3-hydroxyacyl-[acyl-carrier-protein] dehydratase FabZ from Ligilactobacillus salivarius (strain UCC118) (Lactobacillus salivarius).